The chain runs to 600 residues: Alpha pinene synthase, chloroplastic (600 aa).

Positions 1 to 26 (MSSISMHARPLNISAANNHHPSWDRR) are disordered. The N-terminal 31 residues, 1–31 (MSSISMHARPLNISAANNHHPSWDRRVSKPR), are a transit peptide targeting the chloroplast. Mg(2+)-binding residues include aspartate 354, aspartate 358, aspartate 498, and glutamate 506. Residues 354-358 (DDVYD) carry the DDXXD motif motif.

Belongs to the terpene synthase family. Tpsa subfamily. The cofactor is Mg(2+). Mn(2+) is required as a cofactor. Barely detectable in leaves.

The protein resides in the plastid. The protein localises to the chloroplast. The catalysed reaction is (2E)-geranyl diphosphate = alpha-pinene + diphosphate. The protein operates within secondary metabolite biosynthesis; terpenoid biosynthesis. In terms of biological role, monoterpene synthase involved in the biosynthesis of volatile compounds widely used in aromatherapy and folk medicine, and present in culinary herbs. Mediates the conversion of (2E)-geranyl diphosphate (GPP) into alpha-pinene and, as minor compounds, into alpha-phellandrene, limonene and alpha-terpinolene. The sequence is that of Alpha pinene synthase, chloroplastic from Lavandula stoechas (Butterfly lavender).